The primary structure comprises 442 residues: tRNA-2-methylthio-N(6)-dimethylallyladenosine synthase (442 aa).

One can recognise an MTTase N-terminal domain in the interval Lys-3–Ile-120. Residues Cys-12, Cys-49, Cys-83, Cys-157, Cys-161, and Cys-164 each contribute to the [4Fe-4S] cluster site. Residues Arg-143–Glu-375 form the Radical SAM core domain. The TRAM domain maps to Arg-378 to Gln-442.

It belongs to the methylthiotransferase family. MiaB subfamily. In terms of assembly, monomer. [4Fe-4S] cluster serves as cofactor.

It localises to the cytoplasm. The catalysed reaction is N(6)-dimethylallyladenosine(37) in tRNA + (sulfur carrier)-SH + AH2 + 2 S-adenosyl-L-methionine = 2-methylsulfanyl-N(6)-dimethylallyladenosine(37) in tRNA + (sulfur carrier)-H + 5'-deoxyadenosine + L-methionine + A + S-adenosyl-L-homocysteine + 2 H(+). Its function is as follows. Catalyzes the methylthiolation of N6-(dimethylallyl)adenosine (i(6)A), leading to the formation of 2-methylthio-N6-(dimethylallyl)adenosine (ms(2)i(6)A) at position 37 in tRNAs that read codons beginning with uridine. The sequence is that of tRNA-2-methylthio-N(6)-dimethylallyladenosine synthase from Pseudomonas savastanoi pv. phaseolicola (strain 1448A / Race 6) (Pseudomonas syringae pv. phaseolicola (strain 1448A / Race 6)).